A 412-amino-acid polypeptide reads, in one-letter code: UPF0761 membrane protein LPC_2650 (412 aa).

6 helical membrane passes run 36–56 (ALAFTSLLAVVPLMSVGLAIF), 99–119 (LSIWGVVFLIFTALLVMFTIE), 137–157 (AFLLYWAIISLAPVLLGLSLA), 177–197 (ILHYSPFFLSLIGFTFLYVVV), 210–230 (GGLVAAILFESAKHAFAYYLI), and 241–261 (AFATVPIFFIWVYWVWIITLL).

This sequence belongs to the UPF0761 family.

The protein resides in the cell inner membrane. The protein is UPF0761 membrane protein LPC_2650 of Legionella pneumophila (strain Corby).